A 360-amino-acid chain; its full sequence is WAT1-related protein At3g28070 (360 aa).

Helical transmembrane passes span 15–35, 45–65, 84–104, 108–128, 140–160, 190–210, 224–244, 248–268, 286–306, and 311–331; these read AVFL…STLF, IYPF…PSLF, IGLL…GIEY, TLAS…AIIF, SLAK…VIFY, WLIG…SFIL, VSFL…LVVE, PSVW…MAIV, LYLA…GAIF, and LYLG…AVMW. The EamA domain maps to 30–158; the sequence is GISTLFKFAT…LSLIGALVVI (129 aa).

It belongs to the drug/metabolite transporter (DMT) superfamily. Plant drug/metabolite exporter (P-DME) (TC 2.A.7.4) family.

The protein localises to the membrane. The polypeptide is WAT1-related protein At3g28070 (Arabidopsis thaliana (Mouse-ear cress)).